Reading from the N-terminus, the 589-residue chain is Coronatine-insensitive protein homolog 2 (589 aa).

Residues 18–59 (IPDVALGLVMGFVEDPWDRDAISLVCRHWCRVDALSRKHVTV) enclose the F-box domain. Residues R87, R352, R414, and R501 each coordinate jasmonate.

In terms of assembly, interacts with TIFY9/JAZ5, TIFY11C/JAZ11 and TIFY11D/JAZ12 in a coronatine-dependent manner.

Involved in jasmonate (JA) signaling. Required for jasmonate signaling in plant defense responses. Component of SCF(COI1) E3 ubiquitin ligase complexes, which may mediate the ubiquitination and subsequent proteasomal degradation of target proteins, including TIFY/JAZ family. This chain is Coronatine-insensitive protein homolog 2, found in Oryza sativa subsp. indica (Rice).